Here is a 540-residue protein sequence, read N- to C-terminus: Probable metabolite transport protein YFL040W (540 aa).

The Cytoplasmic portion of the chain corresponds to 1–29 (MTAMKAIVWRLPKMPKIKITKTYEVTKIT). The chain crosses the membrane as a helical span at residues 30–50 (AILTLVGFIMGLEVPSLATFL). Residues 51 to 67 (TNKTFNEYFKYPTPLQQ) are Extracellular-facing. Residue Asn52 is glycosylated (N-linked (GlcNAc...) asparagine). A helical transmembrane segment spans residues 68–88 (GLLMGSTPLGGIMGCFICCIM). At 89–101 (NDRFSRIYQFQSG) the chain is on the cytoplasmic side. A helical membrane pass occupies residues 102–122 (IIIWNIVTLLNFCIWDILGLL). Residues 123–126 (ICRM) lie on the Extracellular side of the membrane. A helical membrane pass occupies residues 127-147 (IKGMILGNFSILVASYANEVI). Residues 148–158 (PRGKRGSTMSY) lie on the Cytoplasmic side of the membrane. A helical membrane pass occupies residues 159 to 179 (IQLCLTIGILVMHYLCIALSL). Residues 180-187 (WDSHFAFR) are Extracellular-facing. A helical membrane pass occupies residues 188–208 (IAWCIGIIPGLLFWMASYALP). Over 209–275 (ESYHWLVLHG…KKLPRGSFKP (67 aa)) the chain is Cytoplasmic. The helical transmembrane segment at 276–296 (LILGMTLQLLVQFSGINIILG) threads the bilayer. Residues 297-313 (YITYICEIVGLEGNVKL) are Extracellular-facing. A helical membrane pass occupies residues 314 to 334 (FTSSIPYFINMVLSLLPITFI). Residues 335–341 (DYTSRKL) lie on the Cytoplasmic side of the membrane. A helical membrane pass occupies residues 342–362 (ITLLGGFPISGLLITIGALFV). The Extracellular portion of the chain corresponds to 363–385 (KYGQDTKPIDGNRSLVWSIGENP). Asn374 carries an N-linked (GlcNAc...) asparagine glycan. The chain crosses the membrane as a helical span at residues 386–406 (FVGGWILTLCFLIVGIFAMSL). The Cytoplasmic portion of the chain corresponds to 407 to 428 (SSIPWVYTNEMLPSRVKVKGFA). Residues 429–449 (ICVTFGWLGNFILTFLCPVMI) traverse the membrane as a helical segment. Topologically, residues 450 to 455 (ERLKGT) are extracellular. A helical membrane pass occupies residues 456 to 476 (TFIIFGSLTFLISLSVLIWFP). Topologically, residues 477–540 (ETKGMSIEDI…KLKSDEEMII (64 aa)) are cytoplasmic. Positions 499-540 (NLHGEKGIKTPDSNSNGGSTRSSQEGQLHKPIKLKSDEEMII) are disordered. The segment covering 509 to 524 (PDSNSNGGSTRSSQEG) has biased composition (polar residues).

Belongs to the major facilitator superfamily. Sugar transporter (TC 2.A.1.1) family.

The protein resides in the membrane. This Saccharomyces cerevisiae (strain ATCC 204508 / S288c) (Baker's yeast) protein is Probable metabolite transport protein YFL040W.